A 61-amino-acid polypeptide reads, in one-letter code: Translational regulator CsrA (61 aa).

The protein belongs to the CsrA/RsmA family. Homodimer; the beta-strands of each monomer intercalate to form a hydrophobic core, while the alpha-helices form wings that extend away from the core.

It localises to the cytoplasm. In terms of biological role, a key translational regulator that binds mRNA to regulate translation initiation and/or mRNA stability. Mediates global changes in gene expression, shifting from rapid growth to stress survival by linking envelope stress, the stringent response and the catabolite repression systems. Usually binds in the 5'-UTR; binding at or near the Shine-Dalgarno sequence prevents ribosome-binding, repressing translation, binding elsewhere in the 5'-UTR can activate translation and/or stabilize the mRNA. Its function is antagonized by small RNA(s). This Actinobacillus succinogenes (strain ATCC 55618 / DSM 22257 / CCUG 43843 / 130Z) protein is Translational regulator CsrA.